Here is a 273-residue protein sequence, read N- to C-terminus: MKIGFIGTGNMGTILIESFIESKAADPSNMTITNRTIEKALHIKNRYNSINVTESLEKLVSENEMIFICVKPLDIYPLLARALPYLRKDHILISITSPVQTEQLEQYVPCQVARVIPSITNRALAGVSLVTFGTSCGESAKAKINELMQHISHPLQIESDITRVASDIVSCGPAFMSYLIQRFIDAAVSETSVSKQDAILMCKEMLVGMGKLLETELYTLPALQEKVCVKGGVTGEGIKALESGVQDMFHRVFQNTHMKYEEDISAVKKQFHV.

It belongs to the pyrroline-5-carboxylate reductase family.

Its function is as follows. Dispensable for transformability. Not known if it can act as a pyrroline-5-carboxylate reductase. The polypeptide is ComE operon protein 4 (comER) (Bacillus subtilis (strain 168)).